Here is a 400-residue protein sequence, read N- to C-terminus: Bifunctional arginine demethylase and lysyl-hydroxylase psr-1 (400 aa).

Residues 146-310 (RKTKKLSEDY…LVWPKTVKGR (165 aa)) enclose the JmjC domain. Residue Thr189 participates in substrate binding. Fe cation contacts are provided by His192 and Asp194. Asn202 contributes to the 2-oxoglutarate binding site. Residue Lys209 coordinates substrate. A Fe cation-binding site is contributed by His278. A 2-oxoglutarate-binding site is contributed by Thr290. The interval 342 to 400 (DMNESSSDSSSSSSSSDDSSDESDCDDSGRCGGRKRKNDDRSNECPEKMSTTYFQNSLV) is disordered. Over residues 346-358 (SSSDSSSSSSSSD) the composition is skewed to low complexity. Residues 378 to 388 (KNDDRSNECPE) show a composition bias toward basic and acidic residues. Positions 390–400 (MSTTYFQNSLV) are enriched in polar residues.

This sequence belongs to the JMJD6 family. As to quaternary structure, interacts with ced-5 and ced-12. The cofactor is Fe(2+).

It localises to the nucleus. In terms of biological role, dioxygenase that can both act as a histone arginine demethylase and a lysyl-hydroxylase. This chain is Bifunctional arginine demethylase and lysyl-hydroxylase psr-1 (psr-1), found in Caenorhabditis elegans.